The primary structure comprises 307 residues: 4-hydroxythreonine-4-phosphate dehydrogenase (307 aa).

Residues H121 and T122 each contribute to the substrate site. Residues H150, H189, and H246 each contribute to the a divalent metal cation site. Residues K254, N263, and R272 each coordinate substrate.

This sequence belongs to the PdxA family. Homodimer. Zn(2+) is required as a cofactor. It depends on Mg(2+) as a cofactor. The cofactor is Co(2+).

The protein localises to the cytoplasm. The catalysed reaction is 4-(phosphooxy)-L-threonine + NAD(+) = 3-amino-2-oxopropyl phosphate + CO2 + NADH. Its pathway is cofactor biosynthesis; pyridoxine 5'-phosphate biosynthesis; pyridoxine 5'-phosphate from D-erythrose 4-phosphate: step 4/5. Its function is as follows. Catalyzes the NAD(P)-dependent oxidation of 4-(phosphooxy)-L-threonine (HTP) into 2-amino-3-oxo-4-(phosphooxy)butyric acid which spontaneously decarboxylates to form 3-amino-2-oxopropyl phosphate (AHAP). The polypeptide is 4-hydroxythreonine-4-phosphate dehydrogenase (Campylobacter fetus subsp. fetus (strain 82-40)).